A 173-amino-acid polypeptide reads, in one-letter code: Alpha-crystallin A chain (173 aa).

The residue at position 1 (Met-1) is an N-acetylmethionine. The interval 1 to 63 is required for complex formation with BFSP1 and BFSP2; sequence MDIAIQHPWF…RTVLDSGISE (63 aa). The residue at position 6 (Gln-6) is a Deamidated glutamine; partial. Ser-45 is subject to Phosphoserine. The residue at position 50 (Gln-50) is a Deamidated glutamine; partial. Residues 52–162 form the sHSP domain; that stretch reads LFRTVLDSGI…GHSERAIPVS (111 aa). At Lys-70 the chain carries N6-acetyllysine. Residue Gln-90 is modified to Deamidated glutamine; partial. N6-acetyllysine is present on Lys-99. His-100 provides a ligand contact to Zn(2+). A Deamidated asparagine; partial modification is found at Asn-101. Zn(2+) is bound by residues Glu-102 and His-107. Ser-122 carries the phosphoserine modification. Asn-123 carries the post-translational modification Deamidated asparagine; partial. A disordered region spans residues 144 to 173; the sequence is PKVPSGVDAGHSERAIPVSREEKPSSAPSS. Positions 153–167 are enriched in basic and acidic residues; that stretch reads GHSERAIPVSREEKP. His-154 serves as a coordination point for Zn(2+). O-linked (GlcNAc) serine glycosylation occurs at Ser-162.

The protein belongs to the small heat shock protein (HSP20) family. In terms of assembly, heteromer composed of three CRYAA and one CRYAB subunits. Inter-subunit bridging via zinc ions enhances stability, which is crucial as there is no protein turn over in the lens. Can also form homodimers and homotetramers (dimers of dimers) which serve as the building blocks of homooligomers. Within homooligomers, the zinc-binding motif is created from residues of 3 different molecules. His-100 and Glu-102 from one molecule are ligands of the zinc ion, and His-107 and His-154 residues from additional molecules complete the site with tetrahedral coordination geometry. Part of a complex required for lens intermediate filament formation composed of BFSP1, BFSP2 and CRYAA. Post-translationally, acetylation at Lys-70 may increase chaperone activity. Undergoes age-dependent proteolytical cleavage at the C-terminus.

It localises to the cytoplasm. Its subcellular location is the nucleus. In terms of biological role, contributes to the transparency and refractive index of the lens. Acts as a chaperone, preventing aggregation of various proteins under a wide range of stress conditions. Required for the correct formation of lens intermediate filaments as part of a complex composed of BFSP1, BFSP2 and CRYAA. The polypeptide is Alpha-crystallin A chain (CRYAA) (Ovis aries (Sheep)).